We begin with the raw amino-acid sequence, 312 residues long: DNA-directed RNA polymerase subunit alpha (312 aa).

The segment at 1–226 is alpha N-terminal domain (alpha-NTD); sequence MIEFEKPNIT…EHLDLFTDLT (226 aa). Residues 244–312 are alpha C-terminal domain (alpha-CTD); the sequence is DHVLERTIEE…DLGLGLKNDK (69 aa).

It belongs to the RNA polymerase alpha chain family. Homodimer. The RNAP catalytic core consists of 2 alpha, 1 beta, 1 beta' and 1 omega subunit. When a sigma factor is associated with the core the holoenzyme is formed, which can initiate transcription.

It carries out the reaction RNA(n) + a ribonucleoside 5'-triphosphate = RNA(n+1) + diphosphate. In terms of biological role, DNA-dependent RNA polymerase catalyzes the transcription of DNA into RNA using the four ribonucleoside triphosphates as substrates. In Streptococcus gordonii (strain Challis / ATCC 35105 / BCRC 15272 / CH1 / DL1 / V288), this protein is DNA-directed RNA polymerase subunit alpha.